The sequence spans 316 residues: Methionyl-tRNA formyltransferase (316 aa).

112 to 115 (SLLP) lines the (6S)-5,6,7,8-tetrahydrofolate pocket.

This sequence belongs to the Fmt family.

It carries out the reaction L-methionyl-tRNA(fMet) + (6R)-10-formyltetrahydrofolate = N-formyl-L-methionyl-tRNA(fMet) + (6S)-5,6,7,8-tetrahydrofolate + H(+). In terms of biological role, attaches a formyl group to the free amino group of methionyl-tRNA(fMet). The formyl group appears to play a dual role in the initiator identity of N-formylmethionyl-tRNA by promoting its recognition by IF2 and preventing the misappropriation of this tRNA by the elongation apparatus. This is Methionyl-tRNA formyltransferase from Psychromonas ingrahamii (strain DSM 17664 / CCUG 51855 / 37).